We begin with the raw amino-acid sequence, 461 residues long: E3 ubiquitin-protein ligase parkin (461 aa).

The region spanning 30-90 (VNIYVKSNVG…DSTVIEVLDF (61 aa)) is the Ubiquitin-like domain. At Ser92 the chain carries Phosphoserine. An RING-type 0; atypical zinc finger spans residues 145–227 (AHFFIYCANP…SQGENDTAVP (83 aa)). Zn(2+)-binding residues include Cys151, Cys155, Cys167, and Cys170. Thr176 carries the post-translational modification Phosphothreonine. Zn(2+) contacts are provided by Cys197, Cys202, Cys213, His216, Cys240, Cys243, Cys255, His259, Cys262, Cys265, Cys291, Cys295, Cys334, Cys339, Cys354, Cys356, Cys361, Cys364, His369, Cys373, Cys415, and Cys418. The tract at residues 236–461 (KKIPCLACTD…RDCMASHWFG (226 aa)) is TRIAD supradomain. Residues 240–295 (CLACTDICDPVLVFSCDNRHVTCLECFKNYCGSRLKDRQFLSHPDFGYTLPCPAGC) form an RING-type 1 zinc finger. 2 IBR-type zinc fingers span residues 315–373 (EQYH…LGEC) and 411–452 (LTKP…PWER). Residues 415-446 (CPKCRTSTERAGGCMHMICTRANCGFHWCWVC) form an RING-type 2; atypical zinc finger. Residue Cys428 is part of the active site. Cys433, Cys438, Cys443, Cys446, Cys454, and His458 together coordinate Zn(2+).

This sequence belongs to the RBR family. Parkin subfamily. Forms an E3 ubiquitin ligase complex with E2 ubiquitin-conjugating enzymes. In terms of processing, auto-ubiquitinates in an E2-dependent manner leading to its own degradation. Phosphorylated. Activation requires phosphorylation at Ser-92 by Pink1 and binding to Pink1-phosphorylated polyubiquitin chains. Phosphorylation at Thr-176 by Pink1 is also important for mitochondrial localization.

The protein resides in the mitochondrion. It is found in the cytoplasm. The protein localises to the cytosol. It carries out the reaction [E2 ubiquitin-conjugating enzyme]-S-ubiquitinyl-L-cysteine + [acceptor protein]-L-lysine = [E2 ubiquitin-conjugating enzyme]-L-cysteine + [acceptor protein]-N(6)-ubiquitinyl-L-lysine.. The protein operates within protein modification; protein ubiquitination. In the autoinhibited state the side chain of Phe-460 inserts into a hydrophobic groove in RING-0, occluding the ubiquitin acceptor site Cys-428, whereas the REP repressor element binds RING-1 and blocks its E2-binding site. Activation of park requires 2 steps: (1) phosphorylation at Ser-92 by Pink1 and (2) binding to phosphorylated ubiquitin, leading to unlock repression of the catalytic Cys-428 by the RING-0 region via an allosteric mechanism and converting park to its fully-active form. According to another report, phosphorylation at Ser-92 by Pink1 is not essential for activation and only binding to phosphorylated ubiquitin is essential to unlock repression. Functionally, E3 ubiquitin-protein ligase which accepts ubiquitin from E2 ubiquitin-conjugating enzymes in the form of a thioester and then directly transfers the ubiquitin to targeted substrates, such as Marf, Opa1, Sep1, Tom20 and porin. Mediates monoubiquitination as well as 'Lys-6', 'Lys-11', 'Lys-48'-linked and 'Lys-63'-linked polyubiquitination of substrates, depending on the context. Protects against mitochondrial dysfunction during cellular stress, by acting downstream of Pink1, to coordinate mitochondrial quality control mechanisms that remove and replace dysfunctional mitochondrial components. Depending on the severity of mitochondrial damage and/or dysfunction, activity ranges from preventing apoptosis and stimulating mitochondrial biogenesis to regulating mitochondrial dynamics and eliminating severely damaged mitochondria via mitophagy. Appears to be particularly important in maintaining the physiology and function of cells with high energy demands that are undergoing stress or altered metabolic environment, including spermatids, muscle cells and neurons such as the dopaminergic (DA) neurons. Activation and recruitment onto the outer membrane of damaged/dysfunctional mitochondria (OMM) requires Pink1-mediated phosphorylation of both park and ubiquitin. In depolarized mitochondria, mediates the decision between mitophagy or preventing apoptosis by inducing either the poly- or monoubiquitination of porin/VDAC; polyubiquitination of porin promotes mitophagy, while monoubiquitination of porin decreases mitochondrial calcium influx which ultimately inhibits apoptosis. When cellular stress results in irreversible mitochondrial damage, promotes the autophagic degradation of dysfunctional depolarized mitochondria (mitophagy) by promoting the ubiquitination of mitochondrial proteins. Preferentially assembles 'Lys-6'-, 'Lys-11'- and 'Lys-63'-linked polyubiquitin chains following mitochondrial damage, leading to mitophagy. In developing tissues, inhibits JNK-mediated apoptosis by negatively regulating bsk transcription. The Pink1-park pathway also promotes fission and/or inhibits fusion of damaged mitochondria by mediating the ubiquitination and subsequent degradation of proteins involved in mitochondrial fusion/fission such as Marf and Opa1. This prevents the refusion of unhealthy mitochondria with the healthy mitochondrial network and/or initiates mitochondrial fragmentation facilitating their later engulfment by autophagosomes. Regulates motility of damaged mitochondria by phosphorylating Miro which likely promotes its park-dependent degradation by the proteasome; in motor neurons, this inhibits mitochondrial intracellular anterograde transport along the axons which probably increases the chance of the mitochondria being eliminated in the soma. The Pink1-park pathway is also involved in mitochondrial regeneration processes such as promoting mitochondrial biogenesis, activating localized mitochondrial repair, promoting selective turnover of mitochondrial proteins and initiating the mitochondrial import of endogenous proteins. Involved in mitochondrial biogenesis via the ubiquitination of transcriptional repressor Paris which leads to its subsequent proteasomal degradation and allows activation of the transcription factor srl. Promotes localized mitochondrial repair by activating the translation of specific nuclear-encoded mitochondrial RNAs (nc-mtRNAs) on the mitochondrial surface, including several key electron transport chain component nc-mtRNAs. This Pediculus humanus subsp. corporis (Body louse) protein is E3 ubiquitin-protein ligase parkin.